The sequence spans 409 residues: Tryptophan synthase beta chain (409 aa).

Lys92 carries the N6-(pyridoxal phosphate)lysine modification.

It belongs to the TrpB family. As to quaternary structure, tetramer of two alpha and two beta chains. Pyridoxal 5'-phosphate serves as cofactor.

It catalyses the reaction (1S,2R)-1-C-(indol-3-yl)glycerol 3-phosphate + L-serine = D-glyceraldehyde 3-phosphate + L-tryptophan + H2O. It participates in amino-acid biosynthesis; L-tryptophan biosynthesis; L-tryptophan from chorismate: step 5/5. Its function is as follows. The beta subunit is responsible for the synthesis of L-tryptophan from indole and L-serine. The sequence is that of Tryptophan synthase beta chain (trpB) from Methanococcus voltae.